Here is a 476-residue protein sequence, read N- to C-terminus: Stromelysin-2 (476 aa).

A signal peptide spans 1-17 (MMHLAFLVLLCLPVCSA). A propeptide spans 18–98 (YPLSGAAKEE…PRCGVPDVGH (81 aa)) (activation peptide). Residues 89-96 (PRCGVPDV) carry the Cysteine switch motif. Cys91, His167, Asp169, His182, His195, and His217 together coordinate Zn(2+). Glu218 is a catalytic residue. Zn(2+) contacts are provided by His221 and His227. 4 Hemopexin repeats span residues 286 to 335 (PAKC…WPSL), 336 to 382 (PSYL…GFPP), 384 to 432 (IRKI…FPGV), and 433 to 476 (EPKV…WLHC). Cys289 and Cys476 are oxidised to a cystine.

It belongs to the peptidase M10A family. It depends on Zn(2+) as a cofactor. Ca(2+) is required as a cofactor.

It localises to the secreted. Its subcellular location is the extracellular space. It is found in the extracellular matrix. The catalysed reaction is Similar to stromelysin 1, but action on collagen types III, IV and V is weak.. Functionally, can degrade fibronectin, gelatins of type I, III, IV, and V; weakly collagens III, IV, and V. Activates procollagenase. The polypeptide is Stromelysin-2 (MMP10) (Homo sapiens (Human)).